A 491-amino-acid polypeptide reads, in one-letter code: G2/mitotic-specific cyclin-A (491 aa).

Residues 1–21 (MASFQIHQDMSNKENPGIKIP) form a disordered region. One can recognise a Cyclin N-terminal domain in the interval 206–332 (DILEYFRESE…ILKILSFDLC (127 aa)).

It belongs to the cyclin family. Cyclin AB subfamily. As to quaternary structure, component of the Frs-CycA-Cdk1 complex composed of CycA, Cdk1 and Z600. Interacts (via C-terminus) with Z600. Interacts with otu and (via C-terminus) with bam; the interaction stabilizes CycA by negatively regulating its ubiquitination. In terms of processing, ubiquitinated. Ubiquitination state is negatively regulated by a deubiquitinase complex made up of bam and otu.

Functionally, essential for the control of the cell cycle at the G2/M (mitosis) transition. Interacts with the Cdk1 and Cdk2 protein kinases to form MPF. G2/M cyclins accumulate steadily during G2 and are abruptly destroyed at mitosis. This is G2/mitotic-specific cyclin-A (CycA) from Drosophila melanogaster (Fruit fly).